We begin with the raw amino-acid sequence, 376 residues long: Fibromodulin (376 aa).

An N-terminal signal peptide occupies residues 1–18 (MQWASVLLLAGLCSLSQG). Position 19 is a pyrrolidone carboxylic acid (glutamine 19). Sulfotyrosine occurs at positions 20, 38, 53, 55, 63, and 65. The LRRNT domain occupies 67–105 (APPPPEPRDCPQECDCPPNFPTAMYCDNRNLKYLPFVPS). 8 LRR repeats span residues 106-127 (RMKY…VFDN), 130-151 (GLLW…RKVF), 156-176 (HLER…PLPR), 177-198 (SLRE…ALEG), 201-222 (NLTA…MRGL), 224-245 (SLIL…LPSA), 246-266 (LEQL…YFRG), and 269-289 (KLLY…ATNT). N-linked (GlcNAc...) (keratan sulfate) asparagine glycosylation occurs at asparagine 127. Asparagine 166 carries N-linked (GlcNAc...) (keratan sulfate) asparagine glycosylation. N-linked (GlcNAc...) (keratan sulfate) asparagine glycosylation occurs at asparagine 201. Asparagine 291 carries an N-linked (GlcNAc...) (keratan sulfate) asparagine glycan. LRR repeat units lie at residues 294–315 (SLLE…NTNL) and 316–335 (ENLY…SFCT). A disulfide bridge links cysteine 334 with cysteine 367. Asparagine 341 carries N-linked (GlcNAc...) asparagine glycosylation. The LRR 11 repeat unit spans residues 344 to 367 (KLQVLRLDGNEIKRSAMPVDAPLC).

It belongs to the small leucine-rich proteoglycan (SLRP) family. SLRP class II subfamily. As to quaternary structure, binds to type I and type II collagen. Post-translationally, binds keratan sulfate chains. In terms of processing, sulfated on tyrosine residue(s). In terms of tissue distribution, highest levels observed in knee epiphysis, in calvarial and diaphyseal bone, in nasal and costal cartilage, in the eye, and in bladder. In mature knee joint it is mostly present in the proliferating zone of growth plate. It is also observed in ligaments, especially at insertion sites, in the junction between meniscus and joint capsule, in the perimysium of skeletal muscle and in the periosteum.

It localises to the secreted. It is found in the extracellular space. Its subcellular location is the extracellular matrix. Its function is as follows. Affects the rate of fibrils formation. May have a primary role in collagen fibrillogenesis. The chain is Fibromodulin (Fmod) from Mus musculus (Mouse).